The sequence spans 462 residues: Siroheme synthase (462 aa).

The segment at 1–203 (MEYLPLFANL…GKWEHAEKEI (203 aa)) is precorrin-2 dehydrogenase /sirohydrochlorin ferrochelatase. Residues 22-23 (NV) and 43-44 (DD) each bind NAD(+). The residue at position 128 (Ser128) is a Phosphoserine. The interval 215–462 (GNVALVGAGP…NWFGKIIKEQ (248 aa)) is uroporphyrinogen-III C-methyltransferase. An S-adenosyl-L-methionine-binding site is contributed by Pro224. The Proton acceptor role is filled by Asp247. Lys269 serves as the catalytic Proton donor. S-adenosyl-L-methionine is bound by residues 300–302 (GGD), Ile305, 330–331 (TA), Met383, and Gly412.

This sequence in the N-terminal section; belongs to the precorrin-2 dehydrogenase / sirohydrochlorin ferrochelatase family. It in the C-terminal section; belongs to the precorrin methyltransferase family.

It catalyses the reaction uroporphyrinogen III + 2 S-adenosyl-L-methionine = precorrin-2 + 2 S-adenosyl-L-homocysteine + H(+). The catalysed reaction is precorrin-2 + NAD(+) = sirohydrochlorin + NADH + 2 H(+). The enzyme catalyses siroheme + 2 H(+) = sirohydrochlorin + Fe(2+). It participates in cofactor biosynthesis; adenosylcobalamin biosynthesis; precorrin-2 from uroporphyrinogen III: step 1/1. The protein operates within cofactor biosynthesis; adenosylcobalamin biosynthesis; sirohydrochlorin from precorrin-2: step 1/1. It functions in the pathway porphyrin-containing compound metabolism; siroheme biosynthesis; precorrin-2 from uroporphyrinogen III: step 1/1. Its pathway is porphyrin-containing compound metabolism; siroheme biosynthesis; siroheme from sirohydrochlorin: step 1/1. It participates in porphyrin-containing compound metabolism; siroheme biosynthesis; sirohydrochlorin from precorrin-2: step 1/1. Functionally, multifunctional enzyme that catalyzes the SAM-dependent methylations of uroporphyrinogen III at position C-2 and C-7 to form precorrin-2 via precorrin-1. Then it catalyzes the NAD-dependent ring dehydrogenation of precorrin-2 to yield sirohydrochlorin. Finally, it catalyzes the ferrochelation of sirohydrochlorin to yield siroheme. This is Siroheme synthase from Baumannia cicadellinicola subsp. Homalodisca coagulata.